The following is a 531-amino-acid chain: MSGRGAGGFPLPPLSPGGGAVAAALGAPPPPAGPGMLPNPALRGPGPSGGMGVPGAAAFRPMGPAGPAAQYQRPGMSPGSRMPMAGLQVGPPAGSPFGTAAPLRPGMPPTMMDPFRKRLLVPQAQPPMPAQRRGLKRRKMADKVLPQRIRELVPESQAYMDLLAFERKLDQTIARKRMEIQEAIKKPLTQKRKLRIYISNTFSPSKADGDNSGTAGTPGGTPAADKVASWELRVEGKLLDDPSKQKRKFSSFFKSLVIELDKELYGPDNHLVEWHRMPTTQETDGFQVKRPGDLNVKCTLLLMLDHQPPQYKLDPRLARLLGVHTQTRAAIMQALWLYIKHNQLQDGHEREYINCNRYFRQIFSCGRLRFSEIPMKLAGLLQHPDPIVINHVISVDPNDQKKTACYDIDVEVDDPLKAQMSNFLASTTNQQEIASLDVKIHETIESINQLKTQRDFMLSFSTEPQDFIQEWLRSQRRDLKIITDVIGNPEEERRAAFYHQPWAQEAVGRHIFAKVQQRRQELEQVLGIRLT.

The interval Ala20–Ala85 is disordered. Low complexity predominate over residues Pro34–Pro45. An asymmetric dimethylarginine mark is found at Arg81 and Arg104. A disordered region spans residues Phe202–Lys226. Ser203 is modified (phosphoserine). Phosphothreonine is present on Thr217. A Glycyl lysine isopeptide (Lys-Gly) (interchain with G-Cter in SUMO2) cross-link involves residue Lys226. The SWIB/MDM2 domain maps to His306 to His383.

This sequence belongs to the SMARCD family. As to quaternary structure, component of the multiprotein chromatin-remodeling complexes SWI/SNF: SWI/SNF-A (BAF), SWI/SNF-B (PBAF) and related complexes. The canonical complex contains a catalytic subunit (either SMARCA4/BRG1/BAF190A or SMARCA2/BRM/BAF190B), and at least SMARCE1, ACTL6A/BAF53, SMARCC1/BAF155, SMARCC2/BAF170, and SMARCB1/SNF5/BAF47. Other subunits specific to each of the complexes may also be present permitting several possible combinations developmentally and tissue specific. Component of the BAF complex, which includes at least actin (ACTB), ARID1A/BAF250A, ARID1B/BAF250B, SMARCA2/BRM, SMARCA4/BRG1, ACTL6A/BAF53, ACTL6B/BAF53B, SMARCE1/BAF57, SMARCC1/BAF155, SMARCC2/BAF170, SMARCB1/SNF5/INI1, and one or more SMARCD1/BAF60A, SMARCD2/BAF60B, or SMARCD3/BAF60C. In muscle cells, the BAF complex also contains DPF3. Component of the SWI/SNF-B (PBAF) chromatin remodeling complex, at least composed of SMARCA4/BRG1, SMARCB1/BAF47/SNF5, ACTL6A/BAF53A or ACTL6B/BAF53B, SMARCE1/BAF57, SMARCD1/BAF60A, SMARCD2/BAF60B, perhaps SMARCD3/BAF60C, SMARCC1/BAF155, SMARCC2/BAF170, PBRM1/BAF180, ARID2/BAF200 and actin (ACTB). Interacts with UNKL. Interacts with CEBPE. Post-translationally, ubiquitinated through a signaling process involving RAC1 and the RING finger protein UNKL.

It is found in the nucleus. Functionally, involved in transcriptional activation and repression of select genes by chromatin remodeling (alteration of DNA-nucleosome topology). Component of SWI/SNF chromatin remodeling complexes that carry out key enzymatic activities, changing chromatin structure by altering DNA-histone contacts within a nucleosome in an ATP-dependent manner. Critical regulator of myeloid differentiation, controlling granulocytopoiesis and the expression of genes involved in neutrophil granule formation. This Rattus norvegicus (Rat) protein is SWI/SNF-related matrix-associated actin-dependent regulator of chromatin subfamily D member 2 (Smarcd2).